A 173-amino-acid polypeptide reads, in one-letter code: Crossover junction endodeoxyribonuclease RuvC (173 aa).

Residues Asp-11, Glu-71, and Asp-143 contribute to the active site. Mg(2+) is bound by residues Asp-11, Glu-71, and Asp-143.

Belongs to the RuvC family. In terms of assembly, homodimer which binds Holliday junction (HJ) DNA. The HJ becomes 2-fold symmetrical on binding to RuvC with unstacked arms; it has a different conformation from HJ DNA in complex with RuvA. In the full resolvosome a probable DNA-RuvA(4)-RuvB(12)-RuvC(2) complex forms which resolves the HJ. Mg(2+) is required as a cofactor.

It is found in the cytoplasm. It carries out the reaction Endonucleolytic cleavage at a junction such as a reciprocal single-stranded crossover between two homologous DNA duplexes (Holliday junction).. Its function is as follows. The RuvA-RuvB-RuvC complex processes Holliday junction (HJ) DNA during genetic recombination and DNA repair. Endonuclease that resolves HJ intermediates. Cleaves cruciform DNA by making single-stranded nicks across the HJ at symmetrical positions within the homologous arms, yielding a 5'-phosphate and a 3'-hydroxyl group; requires a central core of homology in the junction. The consensus cleavage sequence is 5'-(A/T)TT(C/G)-3'. Cleavage occurs on the 3'-side of the TT dinucleotide at the point of strand exchange. HJ branch migration catalyzed by RuvA-RuvB allows RuvC to scan DNA until it finds its consensus sequence, where it cleaves and resolves the cruciform DNA. The chain is Crossover junction endodeoxyribonuclease RuvC from Brucella suis biovar 1 (strain 1330).